The primary structure comprises 286 residues: ATP synthase gamma chain (286 aa).

It belongs to the ATPase gamma chain family. In terms of assembly, F-type ATPases have 2 components, CF(1) - the catalytic core - and CF(0) - the membrane proton channel. CF(1) has five subunits: alpha(3), beta(3), gamma(1), delta(1), epsilon(1). CF(0) has three main subunits: a, b and c.

The protein localises to the cell membrane. Its function is as follows. Produces ATP from ADP in the presence of a proton gradient across the membrane. The gamma chain is believed to be important in regulating ATPase activity and the flow of protons through the CF(0) complex. The protein is ATP synthase gamma chain of Malacoplasma penetrans (strain HF-2) (Mycoplasma penetrans).